The following is a 397-amino-acid chain: Lysophospholipid transporter LplT (397 aa).

Topologically, residues 1-17 (MSESVHTNTSLWSKGMK) are periplasmic. The helical transmembrane segment at 18 to 38 (AVIVAQFLSAFGDNALLFATL) threads the bilayer. At 39 to 52 (ALLKAQFYPEWSQP) the chain is on the cytoplasmic side. Residues 53-73 (ILQMVFVGAYILFAPFVGQVA) form a helical membrane-spanning segment. At 74–90 (DSFAKGRVMMFANGLKL) the chain is on the periplasmic side. A helical transmembrane segment spans residues 91–111 (LGAASICFGINPFLGYTLVGV). Residues 112 to 144 (GAAAYSPAKYGILGELTTGSKLVKANGLMEAST) are Cytoplasmic-facing. The chain crosses the membrane as a helical span at residues 145–165 (IAAILLGSVAGGVLADWHVLV). A topological domain (periplasmic) is located at residue Ala166. A helical transmembrane segment spans residues 167 to 187 (LAACALAYGGAVVANIYIPKL). Residues 188–226 (AAARPGQSWNLINMTRSFLNACTSLWRNGETRFSLVGTS) are Cytoplasmic-facing. The chain crosses the membrane as a helical span at residues 227–247 (LFWGAGVTLRFLLVLWVPVAL). At 248–256 (GITDNSTPT) the chain is on the periplasmic side. The helical transmembrane segment at 257–277 (YLNAMVAIGIVVGAGAAAKLV) threads the bilayer. Topologically, residues 278–280 (TLE) are cytoplasmic. Residues 281–301 (TVSRCMPAGILIGVVVLIFSL) traverse the membrane as a helical segment. The Periplasmic segment spans residues 302 to 304 (QHE). The helical transmembrane segment at 305–325 (LLPAYALLMLIGVMGGFFVVP) threads the bilayer. Over 326-343 (LNALLQERGKKSVGAGNA) the chain is Cytoplasmic. The helical transmembrane segment at 344–364 (IAVQNLGENSAMLLMLGIYSL) threads the bilayer. The Periplasmic portion of the chain corresponds to 365–366 (AV). A helical membrane pass occupies residues 367-387 (MVGIPVVPIGIGFGALFALAI). The Cytoplasmic portion of the chain corresponds to 388–397 (TALWIWQRRH).

This sequence belongs to the major facilitator superfamily. LplT (TC 2.A.1.42) family.

It localises to the cell inner membrane. In terms of biological role, catalyzes the facilitated diffusion of 2-acyl-glycero-3-phosphoethanolamine (2-acyl-GPE) into the cell. The polypeptide is Lysophospholipid transporter LplT (Shigella boydii serotype 4 (strain Sb227)).